Reading from the N-terminus, the 319-residue chain is Small ribosomal subunit protein RACK1 (319 aa).

Position 2 is an N-acetylalanine (Ala2). WD repeat units lie at residues 15–55, 63–102, 105–145, 147–191, 194–233, 235–275, and 284–319; these read GHNG…QKFG, GHSHIVQDCTLTADGAYALSASWDKTLRLWDVATGETYQR, GHKS…ATLL, HNDW…IEAD, GHNSNINTLTASPDGTLIASAGKDGEIMLWNLAAKKAMYT, SAQD…DDLR, and AAEPHAVSLAWSADGQTLFAGYTDNVIRVWQVMTAN. Glycyl lysine isopeptide (Lys-Gly) (interchain with G-Cter in ubiquitin) cross-links involve residues Lys46 and Lys53. Thr96 carries the post-translational modification Phosphothreonine. Glycyl lysine isopeptide (Lys-Gly) (interchain with G-Cter in ubiquitin) cross-links involve residues Lys107, Lys137, and Lys161. Residue Thr168 is modified to Phosphothreonine.

It belongs to the WD repeat G protein beta family. Ribosomal protein RACK1 subfamily. As to quaternary structure, component of the small ribosomal subunit (SSU). Mature yeast ribosomes consist of a small (40S) and a large (60S) subunit. The 40S small subunit contains 1 molecule of ribosomal RNA (18S rRNA) and 33 different proteins (encoded by 57 genes). The large 60S subunit contains 3 rRNA molecules (25S, 5.8S and 5S rRNA) and 46 different proteins (encoded by 81 genes). RACK1 is located at the head of the SSU in the vicinity of the mRNA exit channel. RACK1 interacts with the mRNA-binding protein SCP16. RACK1 also exists simultaneously as a homodimer in a cytosolic non-ribosome-bound form.

The protein resides in the cytoplasm. Functionally, component of the ribosome, a large ribonucleoprotein complex responsible for the synthesis of proteins in the cell. The small ribosomal subunit (SSU) binds messenger RNAs (mRNAs) and translates the encoded message by selecting cognate aminoacyl-transfer RNA (tRNA) molecules. The large subunit (LSU) contains the ribosomal catalytic site termed the peptidyl transferase center (PTC), which catalyzes the formation of peptide bonds, thereby polymerizing the amino acids delivered by tRNAs into a polypeptide chain. The nascent polypeptides leave the ribosome through a tunnel in the LSU and interact with protein factors that function in enzymatic processing, targeting, and the membrane insertion of nascent chains at the exit of the ribosomal tunnel. Located at the head of the 40S ribosomal subunit in the vicinity of the mRNA exit channel, RACK1 serves as a scaffold protein that can recruit other proteins to the ribosome. Involved in induction of the ribosome quality control (RQC) pathway; a pathway that degrades nascent peptide chains during problematic translation. Involved in the negative regulation of translation of a specific subset of proteins. This Saccharomyces cerevisiae (strain ATCC 204508 / S288c) (Baker's yeast) protein is Small ribosomal subunit protein RACK1.